The primary structure comprises 366 residues: Mitochondrial division protein fszB (366 aa).

GTP contacts are provided by residues 70–74, 157–159, Glu-190, and Asp-238; these read GGGGN and GTG.

The protein belongs to the FtsZ family.

It localises to the mitochondrion. Its function is as follows. Probably involved in mitochondrion division process. Binds to and hydrolyzes GTP. This Dictyostelium discoideum (Social amoeba) protein is Mitochondrial division protein fszB (fszB).